A 479-amino-acid polypeptide reads, in one-letter code: Neuronal acetylcholine receptor subunit alpha-9 (479 aa).

A signal peptide spans 1–25 (MNRPHSCLSFCWMYFAASGIRAVET). Over 26 to 237 (ANGKYAQKLF…TFTLLLKRRS (212 aa)) the chain is Extracellular. A glycan (N-linked (GlcNAc...) asparagine) is linked at Asn57. Cys155 and Cys169 are oxidised to a cystine. N-linked (GlcNAc...) asparagine glycosylation occurs at Asn170. Residues Ser191 and Asp193 each contribute to the Na(+) site. An intrachain disulfide couples Cys219 to Cys220. Transmembrane regions (helical) follow at residues 238-262 (SFYI…FYLP), 269-287 (VSLG…LMVA), and 302-323 (YYIA…VMNI). Over 324-457 (HFCGAEARPV…WKKVAKVIDR (134 aa)) the chain is Cytoplasmic. The helical transmembrane segment at 458–476 (FFMWIFFAMVFVMTVLIIA) threads the bilayer.

The protein belongs to the ligand-gated ion channel (TC 1.A.9) family. Acetylcholine receptor (TC 1.A.9.1) subfamily. Alpha-9/CHRNA9 sub-subfamily. In terms of assembly, forms homo- or heterooligomeric channels in conjunction with CHRNA10. The native outer hair cell receptor may be composed of CHRNA9:CHRNA10 heterooligomers. Found in the stoichiometric form (CHRNA9)2:(CHRNA10)3. In terms of tissue distribution, detected in the nasal epithelium, in the outer hair cells of the cochlea, in the pars tuberalis of the hypophysis, and in the developing muscle of the tongue. Also expressed in the neurons of dorsal root ganglia.

The protein resides in the synaptic cell membrane. It localises to the cell membrane. It carries out the reaction Ca(2+)(in) = Ca(2+)(out). It catalyses the reaction Mg(2+)(in) = Mg(2+)(out). The enzyme catalyses K(+)(in) = K(+)(out). The catalysed reaction is Na(+)(in) = Na(+)(out). Activated by a myriad of ligands such as acetylcholine. AChR activity is inhibited by the antagonist alpha-conotoxins RgIA and GeXXA, small disulfide-constrained peptides from cone snails. Component of neuronal acetylcholine receptors (nAChRs) that function as pentameric, ligand-gated cation channels with high calcium permeability among other activities. nAChRs are excitatory neurotrasnmitter receptors formed by a collection of nAChR subunits known to mediate synaptic transmission in the nervous system and the neuromuscular junction. Each nAchR subunit confers differential attributes to channel properties, including activation, deactivation and desensitization kinetics, pH sensitivity, cation permeability, and binding to allosteric modulators. Forms either homopentamers or heteropentamers with CHRNA10. Expressed in the inner ear, in sympathetic neurons and in other non-neuronal cells, such as skin keratinocytes and lymphocytes. nAChR formed by CHRNA9:CHRNA10 mediate central nervous system control of auditory and vestibular sensory processing. The channel is permeable to a range of divalent cations including calcium, the influx of which may activate a potassium current which hyperpolarizes the cell membrane. In the ear, mediates synaptic transmission between efferent olivocochlear fibers and hair cells of the cochlea, this may lead to a reduction in basilar membrane motion, altering the activity of auditory nerve fibers and reducing the range of dynamic hearing. This may protect against acoustic trauma. May also regulate keratinocyte adhesion. The chain is Neuronal acetylcholine receptor subunit alpha-9 (Chrna9) from Rattus norvegicus (Rat).